A 543-amino-acid polypeptide reads, in one-letter code: MPKVLLHDIEARRALARGVQKLAAAIESTLGPKGMNAMVDRPIGTPIVSRDGVTIASEIELPDRFENMGAQVVREVSMQTNEVAGDGTTTAMVLANGLIQGGVAALERGAKAVDLCKGIDRAVEVVVESLKSAAIPVSDRRTLQAVATIASTDSHLGDLIAEAVERVGKDGIISSDYGLTTSTTLEVVEGMSFDRGYISHHMVTDVEKMEVVLEQPYILLTDLKIKAPGELAAVRARVAETGKPLVIVAEEIAPEVVVTLLGEGNRGKVLVVNPPDYGHWRKAMMDDLAIITGGRVIARELGGMLEEASLADLGTARQVRASARETVIIRGGGDDAAIAARRQQVAKQHDLAPPNIEQDKLKERLAKLSGGTAVIFAGGVTPVEQKRTIQLIDDALSAARAAAEEGIVPGGGTALAQCAPVVVRALGNINGDLGEGIKLVRETLSRPAAFIARNAGHDAAKVVAELQSSRAGVGFDAANGVFIDMVSAGIVDPVRVTYTALRNAASVATLVLTTNTLVADVPEYVDPTQGPALGGGAEKLGRA.

Residues 29-32 (TLGP), 86-90 (DGTTT), glycine 411, 476-478 (DAA), and aspartate 492 contribute to the ATP site.

Belongs to the chaperonin (HSP60) family. Forms a cylinder of 14 subunits composed of two heptameric rings stacked back-to-back. Interacts with the co-chaperonin GroES.

It localises to the cytoplasm. The catalysed reaction is ATP + H2O + a folded polypeptide = ADP + phosphate + an unfolded polypeptide.. Functionally, together with its co-chaperonin GroES, plays an essential role in assisting protein folding. The GroEL-GroES system forms a nano-cage that allows encapsulation of the non-native substrate proteins and provides a physical environment optimized to promote and accelerate protein folding. The chain is Chaperonin GroEL 4 from Bradyrhizobium diazoefficiens (strain JCM 10833 / BCRC 13528 / IAM 13628 / NBRC 14792 / USDA 110).